The following is a 339-amino-acid chain: Tetraacyldisaccharide 4'-kinase (339 aa).

58-65 (TVGGSGKT) contributes to the ATP binding site.

It belongs to the LpxK family.

It carries out the reaction a lipid A disaccharide + ATP = a lipid IVA + ADP + H(+). It functions in the pathway glycolipid biosynthesis; lipid IV(A) biosynthesis; lipid IV(A) from (3R)-3-hydroxytetradecanoyl-[acyl-carrier-protein] and UDP-N-acetyl-alpha-D-glucosamine: step 6/6. Functionally, transfers the gamma-phosphate of ATP to the 4'-position of a tetraacyldisaccharide 1-phosphate intermediate (termed DS-1-P) to form tetraacyldisaccharide 1,4'-bis-phosphate (lipid IVA). This is Tetraacyldisaccharide 4'-kinase from Shewanella baltica (strain OS155 / ATCC BAA-1091).